The following is a 170-amino-acid chain: Fluoride-specific ion channel FluC 2 (170 aa).

The next 4 helical transmembrane spans lie at 8–28, 55–75, 84–104, and 114–134; these read ALVF…TVWI, IALL…VGMI, TFWG…AAAV, and ILIG…AAAM. Na(+)-binding residues include G92 and T95.

Belongs to the fluoride channel Fluc/FEX (TC 1.A.43) family.

It is found in the cell membrane. It carries out the reaction fluoride(in) = fluoride(out). Its activity is regulated as follows. Na(+) is not transported, but it plays an essential structural role and its presence is essential for fluoride channel function. Functionally, fluoride-specific ion channel. Important for reducing fluoride concentration in the cell, thus reducing its toxicity. This chain is Fluoride-specific ion channel FluC 2, found in Corynebacterium jeikeium (strain K411).